Here is a 525-residue protein sequence, read N- to C-terminus: MSGSATASPPAKPDLPSSDGAGLTPDAQCPYLLEISHISKGFPGVIALDDVQLRLRPGSVLALMGENGAGKSTLMKIIAGIYQPDTGEIRLRGKPISFTTPLSALQAGIAMIHQELNLMPFMSIAENIWIGREQLNGLHMVDHREMHRCTAQLLERLRIKLDPEELVGNLSIAERQMVEIAKAVSYDSDVLIMDEPTSAITETEVEHLFSIIADLRSQGKGIIYITHKMNEVFKIADEVAVFRDGTYIGLQRAESMDGDSLISMMVGRELTQLFPQREKPAGDVLLSVSDLSLKGIFQQVSFDLRAGEVLGIAGLMGSGRTNVAETLFGITPSDSGEIRFDGKTVRIGDPHQAIELGFALLTEDRKLTGLFPCLSVMENMEMAVLANYAGSGFVQQKALRALCEDMCKKLRVKTPSLEQCIDTLSGGNQQKALLARWLMTNPRVLILDEPTRGIDVGAKAEIYRLISLLASEGMAVIMISSELPEVLGMSDRVMVMHEGEMMGILDRSEATQEKVMHLASGHRVH.

The disordered stretch occupies residues 1-20 (MSGSATASPPAKPDLPSSDG). ABC transporter domains lie at 33–269 (LEIS…VGRE) and 279–523 (KPAG…SGHR). An ATP-binding site is contributed by 65–72 (GENGAGKS).

The protein belongs to the ABC transporter superfamily. Carbohydrate importer 2 (CUT2) (TC 3.A.1.2) family.

It localises to the cell inner membrane. It catalyses the reaction D-ribose(out) + ATP + H2O = D-ribose(in) + ADP + phosphate + H(+). The catalysed reaction is D-galactose(out) + ATP + H2O = D-galactose(in) + ADP + phosphate + H(+). In terms of biological role, part of an ABC transporter complex involved in carbohydrate import. Could be involved in ribose, galactose and/or methyl galactoside import. Responsible for energy coupling to the transport system. The sequence is that of Putative ribose/galactose/methyl galactoside import ATP-binding protein from Pseudomonas syringae pv. tomato (strain ATCC BAA-871 / DC3000).